Consider the following 66-residue polypeptide: Small archaeal modifier protein 2 (66 aa).

K58 participates in a covalent cross-link: Glycyl lysine isopeptide (Lys-Gly) (interchain with G-Cter in SAMP2). A 1-thioglycine; alternate modification is found at G66. G66 carries the glycyl adenylate; alternate modification. G66 is covalently cross-linked (Glycyl lysine isopeptide (Gly-Lys) (interchain with K-? in acceptor proteins); alternate).

Monomer. Monomeric and polymeric forms interact with NcsA. In terms of processing, the C-terminal glycine is likely acyl-adenylated (-COAMP) by UbaA, and also probably thiocarboxylated (-COSH) to function in sulfur transfer.

Its function is as follows. Functions as a protein modifier covalently attached to lysine residues of substrate proteins, as well as a sulfur carrier in tRNA thiolation. The protein modification process is termed sampylation and involves the formation of an isopeptide bond between the SAMP2 C-terminal glycine carboxylate and the epsilon-amino group of lysine residues on target proteins. Is able to form polymeric chains with itself at Lys-58, similar to ubiquitin and other ubiquitin-like proteins. May serve as a proteolytic signal in the cell to target proteins for degradation by proteasomes. The protein is Small archaeal modifier protein 2 (samp2) of Haloferax volcanii (strain ATCC 29605 / DSM 3757 / JCM 8879 / NBRC 14742 / NCIMB 2012 / VKM B-1768 / DS2) (Halobacterium volcanii).